Consider the following 430-residue polypeptide: Adenylosuccinate synthetase (430 aa).

GTP contacts are provided by residues 13–19 (GDEGKGK) and 41–43 (GHT). Aspartate 14 (proton acceptor) is an active-site residue. Aspartate 14 and glycine 41 together coordinate Mg(2+). Residues 14-17 (DEGK), 39-42 (NAGH), threonine 130, arginine 144, glutamine 225, threonine 240, and arginine 304 contribute to the IMP site. The active-site Proton donor is the histidine 42. Position 300 to 306 (300 to 306 (ASTGRPR)) interacts with substrate. GTP contacts are provided by residues arginine 306, 332–334 (KLD), and 414–416 (STG).

The protein belongs to the adenylosuccinate synthetase family. Homodimer. Requires Mg(2+) as cofactor.

Its subcellular location is the cytoplasm. The catalysed reaction is IMP + L-aspartate + GTP = N(6)-(1,2-dicarboxyethyl)-AMP + GDP + phosphate + 2 H(+). The protein operates within purine metabolism; AMP biosynthesis via de novo pathway; AMP from IMP: step 1/2. Plays an important role in the de novo pathway of purine nucleotide biosynthesis. Catalyzes the first committed step in the biosynthesis of AMP from IMP. This Xylella fastidiosa (strain M23) protein is Adenylosuccinate synthetase.